Here is a 276-residue protein sequence, read N- to C-terminus: Bis(5'-nucleosyl)-tetraphosphatase, symmetrical (276 aa).

This sequence belongs to the Ap4A hydrolase family.

It carries out the reaction P(1),P(4)-bis(5'-adenosyl) tetraphosphate + H2O = 2 ADP + 2 H(+). Hydrolyzes diadenosine 5',5'''-P1,P4-tetraphosphate to yield ADP. The sequence is that of Bis(5'-nucleosyl)-tetraphosphatase, symmetrical from Legionella pneumophila subsp. pneumophila (strain Philadelphia 1 / ATCC 33152 / DSM 7513).